We begin with the raw amino-acid sequence, 553 residues long: Syntaxin-binding protein 4 (553 aa).

Phosphoserine is present on residues Ser10, Ser12, Ser99, and Ser212. Residues 19 to 105 (AFQMITIAKE…RLESAWEIAF (87 aa)) enclose the PDZ domain. A coiled-coil region spans residues 291–417 (SSEADEMERL…VLDCQLRKSE (127 aa)). The residue at position 463 (Ser463) is a Phosphoserine. The WW domain maps to 496–529 (DCLPYGWEEAYTADGIKYFINHVTQTTSWIHPVM).

As to quaternary structure, interacts with STX4A. Post-translationally, phosphorylated on Ser-99 by PKB/AKT2 after insulin treatment. Phosphorylation on Ser-99 abolishes the interaction with STX4A.

The protein resides in the cytoplasm. Functionally, plays a role in the translocation of transport vesicles from the cytoplasm to the plasma membrane. Inhibits the translocation of SLC2A4 from intracellular vesicles to the plasma membrane by STX4A binding and preventing the interaction between STX4A and VAMP2. Stimulation with insulin disrupts the interaction with STX4A, leading to increased levels of SLC2A4 at the plasma membrane. May also play a role in the regulation of insulin release by pancreatic beta cells after stimulation by glucose. This chain is Syntaxin-binding protein 4 (STXBP4), found in Homo sapiens (Human).